Reading from the N-terminus, the 88-residue chain is MAVKIRLRRMGAKKAPFYRIVVADSRSPRDGRFIEEIGYYDPLKKPAVINVNAERALDWLKKGAQLSDTAKALLTKAGVLKKTAGEGQ.

The protein belongs to the bacterial ribosomal protein bS16 family.

This chain is Small ribosomal subunit protein bS16, found in Pelotomaculum thermopropionicum (strain DSM 13744 / JCM 10971 / SI).